The following is a 227-amino-acid chain: ATP synthase F(0) complex subunit a (227 aa).

A run of 6 helical transmembrane segments spans residues 13 to 33 (YLLG…LFPA), 69 to 89 (WALL…LGLL), 98 to 118 (QLSL…IIGM), 132 to 152 (EGTP…SLFI), 179 to 199 (VFVL…VLFL), and 202 to 222 (LLEV…LSLY).

Belongs to the ATPase A chain family. As to quaternary structure, component of the ATP synthase complex composed at least of ATP5F1A/subunit alpha, ATP5F1B/subunit beta, ATP5MC1/subunit c (homooctomer), MT-ATP6/subunit a, MT-ATP8/subunit 8, ATP5ME/subunit e, ATP5MF/subunit f, ATP5MG/subunit g, ATP5MK/subunit k, ATP5MJ/subunit j, ATP5F1C/subunit gamma, ATP5F1D/subunit delta, ATP5F1E/subunit epsilon, ATP5PF/subunit F6, ATP5PB/subunit b, ATP5PD/subunit d, ATP5PO/subunit OSCP. ATP synthase complex consists of a soluble F(1) head domain (subunits alpha(3) and beta(3)) - the catalytic core - and a membrane F(0) domain - the membrane proton channel (subunits c, a, 8, e, f, g, k and j). These two domains are linked by a central stalk (subunits gamma, delta, and epsilon) rotating inside the F1 region and a stationary peripheral stalk (subunits F6, b, d, and OSCP). Interacts with DNAJC30; interaction is direct.

It localises to the mitochondrion inner membrane. It carries out the reaction H(+)(in) = H(+)(out). Subunit a, of the mitochondrial membrane ATP synthase complex (F(1)F(0) ATP synthase or Complex V) that produces ATP from ADP in the presence of a proton gradient across the membrane which is generated by electron transport complexes of the respiratory chain. ATP synthase complex consist of a soluble F(1) head domain - the catalytic core - and a membrane F(1) domain - the membrane proton channel. These two domains are linked by a central stalk rotating inside the F(1) region and a stationary peripheral stalk. During catalysis, ATP synthesis in the catalytic domain of F(1) is coupled via a rotary mechanism of the central stalk subunits to proton translocation. With the subunit c (ATP5MC1), forms the proton-conducting channel in the F(0) domain, that contains two crucial half-channels (inlet and outlet) that facilitate proton movement from the mitochondrial intermembrane space (IMS) into the matrix. Protons are taken up via the inlet half-channel and released through the outlet half-channel, following a Grotthuss mechanism. This Danio rerio (Zebrafish) protein is ATP synthase F(0) complex subunit a.